The sequence spans 314 residues: uncharacterized protein (314 aa).

Positions 1–24 are cleaved as a signal peptide; sequence MKRRRRWRGWLLFPALCFCLLCEA. 14 N-linked (GlcNAc...) asparagine; by host glycosylation sites follow: Asn28, Asn43, Asn57, Asn77, Asn101, Asn102, Asn109, Asn151, Asn170, Asn217, Asn223, Asn252, Asn255, and Asn268. The segment covering 47-114 has biased composition (low complexity); sequence ATTGTTTTSP…TIGTNATSPS (68 aa). The disordered stretch occupies residues 47–116; the sequence is ATTGTTTTSP…GTNATSPSPS (70 aa).

The protein belongs to the HHV-5 UL116 protein family. Interacts with gH. Interacts with UL148. Post-translationally, highly glycosylated.

The protein resides in the virion. Its subcellular location is the host endoplasmic reticulum. In terms of biological role, chaperone protein that cooperates with UL148 to regulate the abundance of gH complexes in virion. First interactor of gH in the host endoplasmic reticulum, regulates the early folding steps of virion assembly. Then, UL148 is recruited and favors the binding of gL. This is an uncharacterized protein from Homo sapiens (Human).